A 289-amino-acid polypeptide reads, in one-letter code: Golgi to ER traffic protein 2 (289 aa).

Residues 1–10 (MSEVSEAEKR) are compositionally biased toward basic and acidic residues. The segment at 1–68 (MSEVSEAEKR…LQRGSNSGQS (68 aa)) is disordered. Over 1–153 (MSEVSEAEKR…VGVHQFQVRQ (153 aa)) the chain is Cytoplasmic. Over residues 11–21 (RILREKRKQKF) the composition is skewed to basic residues. Over residues 33–68 (ITTQQPGGASGDSTVTSAEISDNEGSLQRGSNSGQS) the composition is skewed to polar residues. A helical membrane pass occupies residues 154 to 173 (LKAYMLLLRWAILLPFIYYV). Residues 174-196 (MHPGTAHWLHTSRFLHFVMEPRN) are Lumenal-facing. The helical transmembrane segment at 197-216 (FFMVFTTFEVASISIYYQVL) threads the bilayer. Topologically, residues 217–263 (LTLERTNKVNSLSYSSKLVTWAGLVPDGMLPIDNLQGKVVVALHYWD) are cytoplasmic. A helical transmembrane segment spans residues 264–284 (ILSMYLTDLSLCLVAAGLMKY). Residues 285–289 (YHAAP) lie on the Lumenal side of the membrane.

Belongs to the GET2 family. As to quaternary structure, component of the Golgi to ER traffic (GET) complex, which is composed of GET1, GET2 and GET3. Within the complex, GET1 and GET2 form a heterotetramer which is stabilized by phosphatidylinositol binding and which binds to the GET3 homodimer.

It is found in the endoplasmic reticulum membrane. The protein resides in the golgi apparatus membrane. Required for the post-translational delivery of tail-anchored (TA) proteins to the endoplasmic reticulum. Together with GET1, acts as a membrane receptor for soluble GET3, which recognizes and selectively binds the transmembrane domain of TA proteins in the cytosol. The GET complex cooperates with the HDEL receptor ERD2 to mediate the ATP-dependent retrieval of resident ER proteins that contain a C-terminal H-D-E-L retention signal from the Golgi to the ER. This Eremothecium gossypii (strain ATCC 10895 / CBS 109.51 / FGSC 9923 / NRRL Y-1056) (Yeast) protein is Golgi to ER traffic protein 2.